The following is a 317-amino-acid chain: 17-beta-hydroxysteroid dehydrogenase type 6 (317 aa).

The first 17 residues, 1–17 (MWFYLVTLVGLYHLLRW), serve as a signal peptide directing secretion. 33–57 (FITGCDSGFGNLLARQLDRRGMRVL) is an NAD(+) binding site. Residues Asn71 and Asn161 are each glycosylated (N-linked (GlcNAc...) asparagine). Ser164 contributes to the substrate binding site. Tyr176 serves as the catalytic Proton acceptor.

Belongs to the short-chain dehydrogenases/reductases (SDR) family. As to expression, detected in liver.

Its subcellular location is the microsome membrane. The protein resides in the early endosome membrane. The catalysed reaction is all-trans-retinol--[retinol-binding protein] + NAD(+) = all-trans-retinal--[retinol-binding protein] + NADH + H(+). The enzyme catalyses all-trans-retinol + NAD(+) = all-trans-retinal + NADH + H(+). It carries out the reaction androsterone + NAD(+) = 5alpha-androstan-3,17-dione + NADH + H(+). It catalyses the reaction testosterone + NAD(+) = androst-4-ene-3,17-dione + NADH + H(+). The catalysed reaction is 5alpha-androstane-3alpha,17beta-diol + NAD(+) = 17beta-hydroxy-5alpha-androstan-3-one + NADH + H(+). The enzyme catalyses 17beta-estradiol + NAD(+) = estrone + NADH + H(+). It carries out the reaction 17beta-estradiol + NADP(+) = estrone + NADPH + H(+). It catalyses the reaction 3alpha-hydroxy-5alpha-pregnan-20-one + NAD(+) = 5alpha-pregnane-3,20-dione + NADH + H(+). The catalysed reaction is 5alpha-androstane-3beta,17beta-diol + NAD(+) = 17beta-hydroxy-5alpha-androstan-3-one + NADH + H(+). The enzyme catalyses 3beta-hydroxy-5alpha-androstan-17-one + NAD(+) = 5alpha-androstan-3,17-dione + NADH + H(+). With respect to regulation, inhibited by carbenoxolone and phenyl arsenoxide. In terms of biological role, NAD-dependent oxidoreductase with broad substrate specificity that shows both oxidative and reductive activity (in vitro). Has 17-beta-hydroxysteroid dehydrogenase activity towards various steroids (in vitro). Converts 5-alpha-androstan-3-alpha,17-beta-diol to androsterone and estradiol to estrone (in vitro). Has 3-alpha-hydroxysteroid dehydrogenase activity towards androsterone (in vitro). Has retinol dehydrogenase activity towards all-trans-retinol (in vitro). The sequence is that of 17-beta-hydroxysteroid dehydrogenase type 6 (Hsd17b6) from Mus musculus (Mouse).